We begin with the raw amino-acid sequence, 779 residues long: Transcription factor SPT20 homolog (779 aa).

Position 296 is a phosphoserine (Ser296). 2 disordered regions span residues 373–392 (DEES…DHSN) and 420–507 (PVKM…IPRK). Residues 424–437 (SHSSSGSASLSQVS) show a composition bias toward low complexity. Positions 445 to 454 (TETVSVQSSV) are enriched in polar residues. Positions 470 to 479 (SSSGNSSSGN) are enriched in low complexity. The residue at position 494 (Thr494) is a Phosphothreonine. A phosphoserine mark is found at Ser519 and Ser524. Disordered regions lie at residues 641–677 (QLSQ…EQAL) and 755–779 (LHHH…TPKF). Positions 755–771 (LHHHRHTGSQSKSKMKR) are enriched in basic residues.

Belongs to the SPT20 family. As to quaternary structure, interacts with MAPK14. Interacts with ATG9A. As to expression, highly expressed in testis, moderately in brain and pituitary gland. Expressed in several fetal tissues, including lung, brain, thymus and kidney. Expression is down-regulated in malignant prostate tissues.

It localises to the nucleus. Functionally, required for MAP kinase p38 (MAPK11, MAPK12, MAPK13 and/or MAPK14) activation during gastrulation. Required for down-regulation of E-cadherin during gastrulation by regulating E-cadherin protein level downstream from NCK-interacting kinase (NIK) and independently of the regulation of transcription by FGF signaling and Snail. Required for starvation-induced ATG9A trafficking during autophagy. This chain is Transcription factor SPT20 homolog (SUPT20H), found in Homo sapiens (Human).